The following is a 173-amino-acid chain: Glycine cleavage system H protein, mitochondrial (173 aa).

The transit peptide at 1–48 (MALRVVRSVRALLCTLRAVPSPAAPCPPRPWQLGVGAVRTLRTGPALL) directs the protein to the mitochondrion. A Lipoyl-binding domain is found at 66-148 (IGTVGISNFA…YEDGWLIKMT (83 aa)). At K107 the chain carries N6-lipoyllysine.

This sequence belongs to the GcvH family. Interacts with GLDC. The glycine cleavage system is composed of four proteins: P (GLDC), T (GCST), L (DLD) and H (GCSH). Requires (R)-lipoate as cofactor.

It is found in the mitochondrion. Functionally, the glycine cleavage system catalyzes the degradation of glycine. The H protein (GCSH) shuttles the methylamine group of glycine from the P protein (GLDC) to the T protein (GCST). Has a pivotal role in the lipoylation of enzymes involved in cellular energetics such as the mitochondrial dihydrolipoyllysine-residue acetyltransferase component of pyruvate dehydrogenase complex (DLAT), and the mitochondrial dihydrolipoyllysine-residue succinyltransferase component of 2-oxoglutarate dehydrogenase complex (DLST). In Homo sapiens (Human), this protein is Glycine cleavage system H protein, mitochondrial.